The sequence spans 200 residues: Lipopolysaccharide core heptose(II)-phosphate phosphatase (200 aa).

The N-terminal stretch at Met1–Ala25 is a signal peptide.

It belongs to the phosphoglycerate mutase family. Ais subfamily.

The protein localises to the periplasm. The protein operates within bacterial outer membrane biogenesis; lipopolysaccharide metabolism. Catalyzes the dephosphorylation of heptose(II) of the outer membrane lipopolysaccharide core. The sequence is that of Lipopolysaccharide core heptose(II)-phosphate phosphatase from Escherichia coli O6:K15:H31 (strain 536 / UPEC).